The following is a 273-amino-acid chain: DnaJ homolog subfamily C member 27 (273 aa).

Residues 1–18 are required for interaction with MAPK1; that stretch reads MESNVPKRKEPLKSLRIK. GTP-binding positions include 23-30, 71-75, and 134-137; these read GNAEVGKS, DMAGH, and NKID. The 57-residue stretch at 217–273 folds into the J domain; the sequence is DSWEMLGVRPGASREEVNKAYRKLAVLLHPDKCVAPGSEDAFKAVVNARTALLKNIK.

This sequence belongs to the small GTPase superfamily. Rab family. As to quaternary structure, interacts directly with MAPK1 (wild-type and kinase-deficient forms). Interacts directly (in GTP-bound form) with MAP2K1 (wild-type and kinase-deficient forms).

Its subcellular location is the nucleus. In terms of biological role, GTPase which can activate the MEK/ERK pathway and induce cell transformation when overexpressed. May act as a nuclear scaffold for MAPK1, probably by association with MAPK1 nuclear export signal leading to enhanced ERK1/ERK2 signaling. In Rattus norvegicus (Rat), this protein is DnaJ homolog subfamily C member 27 (Dnajc27).